The following is a 397-amino-acid chain: Acetate kinase 2 (397 aa).

Position 10 (Asn-10) interacts with Mg(2+). Residue Lys-17 participates in ATP binding. Arg-90 contributes to the substrate binding site. Asp-147 functions as the Proton donor/acceptor in the catalytic mechanism. ATP-binding positions include 207-211 (HLGNG), 281-283 (DAR), and 329-333 (GIGEN). Mg(2+) is bound at residue Glu-385.

Belongs to the acetokinase family. In terms of assembly, homodimer. Mg(2+) serves as cofactor. The cofactor is Mn(2+).

The protein resides in the cytoplasm. It carries out the reaction acetate + ATP = acetyl phosphate + ADP. The protein operates within metabolic intermediate biosynthesis; acetyl-CoA biosynthesis; acetyl-CoA from acetate: step 1/2. Its function is as follows. Catalyzes the formation of acetyl phosphate from acetate and ATP. Can also catalyze the reverse reaction. This is Acetate kinase 2 from Aliivibrio fischeri (strain ATCC 700601 / ES114) (Vibrio fischeri).